We begin with the raw amino-acid sequence, 305 residues long: HTH-type transcriptional activator BauR (305 aa).

An HTH lysR-type domain is found at 15-72 (FDIRLLRIFKTIVECGSFSAAESTLGLSRSAISLHMGDLEKRLGMRLCQRGRAGFALT).

The protein belongs to the LysR transcriptional regulatory family.

Its function is as follows. Involved in the degradation of beta-alanine. BauR activates the transcription of the bauABCD operon. The protein is HTH-type transcriptional activator BauR (bauR) of Pseudomonas aeruginosa (strain ATCC 15692 / DSM 22644 / CIP 104116 / JCM 14847 / LMG 12228 / 1C / PRS 101 / PAO1).